We begin with the raw amino-acid sequence, 428 residues long: Elongation factor 1-alpha (428 aa).

The tr-type G domain occupies 5–215 (KPHVNIVFIG…ALDQIPEPPK (211 aa)). Positions 14 to 21 (GHVDHGKS) are G1. GTP is bound at residue 14 to 21 (GHVDHGKS). S21 serves as a coordination point for Mg(2+). Positions 68 to 72 (GITID) are G2. The G3 stretch occupies residues 89–92 (DAPG). GTP contacts are provided by residues 89–93 (DAPGH) and 144–147 (NKMD). Residues 144–147 (NKMD) are G4. The G5 stretch occupies residues 181–183 (SAW).

It belongs to the TRAFAC class translation factor GTPase superfamily. Classic translation factor GTPase family. EF-Tu/EF-1A subfamily.

The protein localises to the cytoplasm. The enzyme catalyses GTP + H2O = GDP + phosphate + H(+). Functionally, GTP hydrolase that promotes the GTP-dependent binding of aminoacyl-tRNA to the A-site of ribosomes during protein biosynthesis. The chain is Elongation factor 1-alpha from Thermococcus onnurineus (strain NA1).